The chain runs to 552 residues: Putative transport protein YPN_3727 (552 aa).

Transmembrane regions (helical) follow at residues 1–21, 26–46, 65–85, 96–116, 119–139, and 158–178; these read MSAI…GLWI, IYGV…VGHF, FGLI…FFSS, FAIL…KLFA, LPII…LGAA, and MGYA…MWLI. 2 consecutive RCK C-terminal domains span residues 192–276 and 279–361; these read AFDS…VVGE and DVTL…IVGN. 6 helical membrane passes run 371-391, 393-413, 439-459, 464-484, 493-513, and 530-550; these read MLPV…PLFV, GFPA…ALIL, IVLF…NTLV, LAWI…VGIL, YLTL…LAFA, and VYPL…VLFW.

Belongs to the AAE transporter (TC 2.A.81) family. YidE subfamily.

The protein resides in the cell membrane. The sequence is that of Putative transport protein YPN_3727 from Yersinia pestis bv. Antiqua (strain Nepal516).